The following is a 129-amino-acid chain: Small ribosomal subunit protein uS11 (129 aa).

The protein belongs to the universal ribosomal protein uS11 family. In terms of assembly, part of the 30S ribosomal subunit. Interacts with proteins S7 and S18. Binds to IF-3.

Located on the platform of the 30S subunit, it bridges several disparate RNA helices of the 16S rRNA. Forms part of the Shine-Dalgarno cleft in the 70S ribosome. The chain is Small ribosomal subunit protein uS11 from Pseudomonas putida (strain GB-1).